We begin with the raw amino-acid sequence, 412 residues long: Multifunctional CCA protein (412 aa).

Residues Gly8 and Arg11 each contribute to the ATP site. CTP contacts are provided by Gly8 and Arg11. Mg(2+)-binding residues include Asp21 and Asp23. 3 residues coordinate ATP: Arg91, Arg137, and Arg140. Positions 91, 137, and 140 each coordinate CTP. The 102-residue stretch at 228 to 329 (TGIHTLMTLS…VKLFDSIDAW (102 aa)) folds into the HD domain.

The protein belongs to the tRNA nucleotidyltransferase/poly(A) polymerase family. Bacterial CCA-adding enzyme type 1 subfamily. Monomer. Can also form homodimers and oligomers. Mg(2+) serves as cofactor. Requires Ni(2+) as cofactor.

It carries out the reaction a tRNA precursor + 2 CTP + ATP = a tRNA with a 3' CCA end + 3 diphosphate. The catalysed reaction is a tRNA with a 3' CCA end + 2 CTP + ATP = a tRNA with a 3' CCACCA end + 3 diphosphate. In terms of biological role, catalyzes the addition and repair of the essential 3'-terminal CCA sequence in tRNAs without using a nucleic acid template. Adds these three nucleotides in the order of C, C, and A to the tRNA nucleotide-73, using CTP and ATP as substrates and producing inorganic pyrophosphate. tRNA 3'-terminal CCA addition is required both for tRNA processing and repair. Also involved in tRNA surveillance by mediating tandem CCA addition to generate a CCACCA at the 3' terminus of unstable tRNAs. While stable tRNAs receive only 3'-terminal CCA, unstable tRNAs are marked with CCACCA and rapidly degraded. This is Multifunctional CCA protein from Escherichia coli O127:H6 (strain E2348/69 / EPEC).